Reading from the N-terminus, the 216-residue chain is Phosphoribosylformylglycinamidine synthase subunit PurQ (216 aa).

The Glutamine amidotransferase type-1 domain occupies 2-216 (SIGVIVFPGS…GRRMLEALLG (215 aa)). Residue C86 is the Nucleophile of the active site. Active-site residues include H193 and E195.

In terms of assembly, part of the FGAM synthase complex composed of 1 PurL, 1 PurQ and 2 PurS subunits.

The protein resides in the cytoplasm. It catalyses the reaction N(2)-formyl-N(1)-(5-phospho-beta-D-ribosyl)glycinamide + L-glutamine + ATP + H2O = 2-formamido-N(1)-(5-O-phospho-beta-D-ribosyl)acetamidine + L-glutamate + ADP + phosphate + H(+). The catalysed reaction is L-glutamine + H2O = L-glutamate + NH4(+). The protein operates within purine metabolism; IMP biosynthesis via de novo pathway; 5-amino-1-(5-phospho-D-ribosyl)imidazole from N(2)-formyl-N(1)-(5-phospho-D-ribosyl)glycinamide: step 1/2. Functionally, part of the phosphoribosylformylglycinamidine synthase complex involved in the purines biosynthetic pathway. Catalyzes the ATP-dependent conversion of formylglycinamide ribonucleotide (FGAR) and glutamine to yield formylglycinamidine ribonucleotide (FGAM) and glutamate. The FGAM synthase complex is composed of three subunits. PurQ produces an ammonia molecule by converting glutamine to glutamate. PurL transfers the ammonia molecule to FGAR to form FGAM in an ATP-dependent manner. PurS interacts with PurQ and PurL and is thought to assist in the transfer of the ammonia molecule from PurQ to PurL. This is Phosphoribosylformylglycinamidine synthase subunit PurQ from Synechococcus sp. (strain CC9605).